A 363-amino-acid polypeptide reads, in one-letter code: Regulator of G-protein signaling rgs-3 (363 aa).

The segment at 1–70 (MWRSYKAETP…NSSATSPTPS (70 aa)) is disordered. The span at 21–35 (LNLHDSSESDHEGRQ) shows a compositional bias: basic and acidic residues. 2 stretches are compositionally biased toward low complexity: residues 36-50 (SRSA…APAS) and 58-70 (PITN…PTPS). RGS domains lie at 112–225 (NCAN…LEYL) and 240–359 (SFEG…IDLL).

Post-translationally, may be phosphorylated and activated by egl-4.

Functionally, modulates chemotaxis responses by regulating positively the sensitivity to CO2 levels in BAG neurons and by regulating negatively the sensitivity to quinine in ASH sensory neurons. In Caenorhabditis elegans, this protein is Regulator of G-protein signaling rgs-3 (rgs-3).